The sequence spans 152 residues: SsrA-binding protein (152 aa).

The protein belongs to the SmpB family.

Its subcellular location is the cytoplasm. Its function is as follows. Required for rescue of stalled ribosomes mediated by trans-translation. Binds to transfer-messenger RNA (tmRNA), required for stable association of tmRNA with ribosomes. tmRNA and SmpB together mimic tRNA shape, replacing the anticodon stem-loop with SmpB. tmRNA is encoded by the ssrA gene; the 2 termini fold to resemble tRNA(Ala) and it encodes a 'tag peptide', a short internal open reading frame. During trans-translation Ala-aminoacylated tmRNA acts like a tRNA, entering the A-site of stalled ribosomes, displacing the stalled mRNA. The ribosome then switches to translate the ORF on the tmRNA; the nascent peptide is terminated with the 'tag peptide' encoded by the tmRNA and targeted for degradation. The ribosome is freed to recommence translation, which seems to be the essential function of trans-translation. This chain is SsrA-binding protein, found in Helicobacter pylori (strain Shi470).